The primary structure comprises 441 residues: Peroxisomal biogenesis factor 3 (441 aa).

Residues 1–17 (MAPNQRSRSLLQRHRGK) are Peroxisomal-facing. The chain crosses the membrane as a helical span at residues 18 to 39 (VLISLTGIAALFTTGSVVVFFV). The Cytoplasmic segment spans residues 40-441 (KRWLYKQQLR…GVSSSFSFKP (402 aa)).

It belongs to the peroxin-3 family. As to quaternary structure, interacts with MSP1; leading to inhibit the translocase activity of MSP1.

It localises to the peroxisome membrane. In terms of biological role, involved in peroxisome biosynthesis. Acts as a regulator of MSP1 by inhibiting the ability of MSP1 to unfold target proteins. This chain is Peroxisomal biogenesis factor 3 (PEX3), found in Saccharomyces cerevisiae (strain ATCC 204508 / S288c) (Baker's yeast).